A 163-amino-acid chain; its full sequence is MASTYSFDIVSDFDRQELVNAVDQARREIKQRYDLKDTQTEIELEEGSLIITTASEMALNSIRDLLLTKAAKRGLSLKIFDFQPPESAGGNRVRQVVRLKKGIDAALAKQIAKQIRDNFKKVQPSIQGDLVRVSGKDKDELQAVIQMLKQQDYPVALQFVNYR.

The protein belongs to the YajQ family.

Its function is as follows. Nucleotide-binding protein. In Synechococcus sp. (strain JA-3-3Ab) (Cyanobacteria bacterium Yellowstone A-Prime), this protein is Nucleotide-binding protein CYA_0935.